The sequence spans 158 residues: SsrA-binding protein (158 aa).

Belongs to the SmpB family.

The protein resides in the cytoplasm. Functionally, required for rescue of stalled ribosomes mediated by trans-translation. Binds to transfer-messenger RNA (tmRNA), required for stable association of tmRNA with ribosomes. tmRNA and SmpB together mimic tRNA shape, replacing the anticodon stem-loop with SmpB. tmRNA is encoded by the ssrA gene; the 2 termini fold to resemble tRNA(Ala) and it encodes a 'tag peptide', a short internal open reading frame. During trans-translation Ala-aminoacylated tmRNA acts like a tRNA, entering the A-site of stalled ribosomes, displacing the stalled mRNA. The ribosome then switches to translate the ORF on the tmRNA; the nascent peptide is terminated with the 'tag peptide' encoded by the tmRNA and targeted for degradation. The ribosome is freed to recommence translation, which seems to be the essential function of trans-translation. The sequence is that of SsrA-binding protein from Parafrankia sp. (strain EAN1pec).